We begin with the raw amino-acid sequence, 436 residues long: S-locus-specific glycoprotein S6 (436 aa).

A signal peptide spans 1 to 31; it reads MKGVRKPYDNSYTLSFLLVFFVLILFCPAFS. A Bulb-type lectin domain is found at 34–156; it reads TLSSTESLRI…SNNDASEYLW (123 aa). N-linked (GlcNAc...) asparagine glycans are attached at residues Asn-46, Asn-64, Asn-114, Asn-121, Asn-245, Asn-261, and Asn-390. The region spanning 351–431 is the PAN domain; the sequence is CSGDGFTRMK…HGQDLYVRLA (81 aa). Cystine bridges form between Cys-381–Cys-406 and Cys-389–Cys-391.

As to expression, stigma.

Involved in sporophytic self-incompatibility system (the inability of flowering plants to achieve self-fertilization). The chain is S-locus-specific glycoprotein S6 (SLSG) from Brassica oleracea (Wild cabbage).